The following is a 146-amino-acid chain: Snaclec echicetin subunit beta (146 aa).

The first 23 residues, 1-23 (MGRFISVSFGLLVLLLSLSGTGA), serve as a signal peptide directing secretion. Cystine bridges form between Cys25-Cys36, Cys53-Cys142, and Cys119-Cys134. Positions 32 to 143 (YEGYCYKVFK…CTWTFSFVCK (112 aa)) constitute a C-type lectin domain.

Belongs to the snaclec family. As to quaternary structure, heterodimer of subunits alpha and beta; disulfide-linked. In terms of tissue distribution, expressed by the venom gland.

It localises to the secreted. Functionally, binding of echicetin to glycoprotein Ibalpha (GP1BA) receptor on platelets alone results in inhibition of platelet aggregation, while binding to both GPIba receptor and IgMk promotes platelet aggregation and signal transduction. The sequence is that of Snaclec echicetin subunit beta from Echis carinatus (Saw-scaled viper).